Here is a 458-residue protein sequence, read N- to C-terminus: uncharacterized protein (458 aa).

2 disordered regions span residues 339–397 and 434–458; these read GTGY…ARIL and YNSE…EDDC. Acidic residues-rich tracts occupy residues 344–390 and 436–458; these read SDSD…EEEP and SEDE…EDDC.

This is an uncharacterized protein from Invertebrate iridescent virus 3 (IIV-3).